The chain runs to 543 residues: Peptide chain release factor 3 (543 aa).

Positions 21–289 (KKRRTFAIIS…ALSDWAPSPL (269 aa)) constitute a tr-type G domain. Residues 30–37 (SHPDAGKT), 98–102 (DTPGH), and 152–155 (NKLD) contribute to the GTP site.

The protein belongs to the TRAFAC class translation factor GTPase superfamily. Classic translation factor GTPase family. PrfC subfamily.

The protein resides in the cytoplasm. In terms of biological role, increases the formation of ribosomal termination complexes and stimulates activities of RF-1 and RF-2. It binds guanine nucleotides and has strong preference for UGA stop codons. It may interact directly with the ribosome. The stimulation of RF-1 and RF-2 is significantly reduced by GTP and GDP, but not by GMP. The chain is Peptide chain release factor 3 from Thiobacillus denitrificans (strain ATCC 25259 / T1).